Consider the following 273-residue polypeptide: Eukaryotic translation initiation factor 3 subunit G-2 (273 aa).

A disordered region spans residues 168 to 192 (PPFMKDGGGGSGGKNWGRGRDRDDS). Gly residues predominate over residues 173 to 183 (DGGGGSGGKNW). One can recognise an RRM domain in the interval 193–271 (SAVRISNLSE…LILCVEWSKP (79 aa)).

The protein belongs to the eIF-3 subunit G family. Component of the eukaryotic translation initiation factor 3 (eIF-3) complex. The eIF-3 complex interacts with pix.

The protein localises to the cytoplasm. Its function is as follows. RNA-binding component of the eukaryotic translation initiation factor 3 (eIF-3) complex, which is involved in protein synthesis of a specialized repertoire of mRNAs and, together with other initiation factors, stimulates binding of mRNA and methionyl-tRNAi to the 40S ribosome. The eIF-3 complex specifically targets and initiates translation of a subset of mRNAs involved in cell proliferation. This subunit can bind 18S rRNA. This Drosophila erecta (Fruit fly) protein is Eukaryotic translation initiation factor 3 subunit G-2.